Reading from the N-terminus, the 241-residue chain is UPF0173 metal-dependent hydrolase Haur_4333 (241 aa).

It belongs to the UPF0173 family.

This Herpetosiphon aurantiacus (strain ATCC 23779 / DSM 785 / 114-95) protein is UPF0173 metal-dependent hydrolase Haur_4333.